Reading from the N-terminus, the 107-residue chain is Phosphoribosyl-ATP pyrophosphatase (107 aa).

This sequence belongs to the PRA-PH family.

The protein resides in the cytoplasm. The enzyme catalyses 1-(5-phospho-beta-D-ribosyl)-ATP + H2O = 1-(5-phospho-beta-D-ribosyl)-5'-AMP + diphosphate + H(+). It participates in amino-acid biosynthesis; L-histidine biosynthesis; L-histidine from 5-phospho-alpha-D-ribose 1-diphosphate: step 2/9. In Agrobacterium fabrum (strain C58 / ATCC 33970) (Agrobacterium tumefaciens (strain C58)), this protein is Phosphoribosyl-ATP pyrophosphatase (hisE).